We begin with the raw amino-acid sequence, 265 residues long: Mlc titration factor A (265 aa).

The Zn(2+) site is built by His-111, His-148, His-152, and Glu-211.

The protein belongs to the MtfA family. As to quaternary structure, interacts with Mlc. Zn(2+) is required as a cofactor.

It localises to the cytoplasm. Involved in the modulation of the activity of the glucose-phosphotransferase system (glucose-PTS). Interacts with the transcriptional repressor Mlc, preventing its interaction with DNA and leading to the modulation of expression of genes regulated by Mlc, including ptsG, which encodes the PTS system glucose-specific EIICB component. Its function is as follows. Shows zinc-dependent metallopeptidase activity. In Escherichia coli (strain 55989 / EAEC), this protein is Mlc titration factor A.